A 372-amino-acid chain; its full sequence is Tetraacyldisaccharide 4'-kinase (372 aa).

65–72 is an ATP binding site; sequence TVGGTGKT. The interval 351 to 372 is disordered; it reads QSTATGMADGLDKEHQDGQPAA. Residues 360 to 372 show a composition bias toward basic and acidic residues; sequence GLDKEHQDGQPAA.

Belongs to the LpxK family.

The enzyme catalyses a lipid A disaccharide + ATP = a lipid IVA + ADP + H(+). Its pathway is glycolipid biosynthesis; lipid IV(A) biosynthesis; lipid IV(A) from (3R)-3-hydroxytetradecanoyl-[acyl-carrier-protein] and UDP-N-acetyl-alpha-D-glucosamine: step 6/6. Functionally, transfers the gamma-phosphate of ATP to the 4'-position of a tetraacyldisaccharide 1-phosphate intermediate (termed DS-1-P) to form tetraacyldisaccharide 1,4'-bis-phosphate (lipid IVA). This Cupriavidus metallidurans (strain ATCC 43123 / DSM 2839 / NBRC 102507 / CH34) (Ralstonia metallidurans) protein is Tetraacyldisaccharide 4'-kinase.